Consider the following 508-residue polypeptide: Photosystem II CP47 reaction center protein (508 aa).

A run of 6 helical transmembrane segments spans residues 21–36 (SVHIMHTALVAGWAGS), 101–115 (IVFSGLCFLAAIWHW), 140–156 (GIHLFLSGVACFGFGAF), 203–218 (IAAGTLGILAGLFHLS), 237–252 (VLSSSIAAVFFAAFVV), and 457–472 (SFALLFFFGHIWHGAR).

It belongs to the PsbB/PsbC family. PsbB subfamily. In terms of assembly, PSII is composed of 1 copy each of membrane proteins PsbA, PsbB, PsbC, PsbD, PsbE, PsbF, PsbH, PsbI, PsbJ, PsbK, PsbL, PsbM, PsbT, PsbX, PsbY, PsbZ, Psb30/Ycf12, at least 3 peripheral proteins of the oxygen-evolving complex and a large number of cofactors. It forms dimeric complexes. Binds multiple chlorophylls. PSII binds additional chlorophylls, carotenoids and specific lipids. is required as a cofactor.

The protein localises to the plastid. It localises to the chloroplast thylakoid membrane. Its function is as follows. One of the components of the core complex of photosystem II (PSII). It binds chlorophyll and helps catalyze the primary light-induced photochemical processes of PSII. PSII is a light-driven water:plastoquinone oxidoreductase, using light energy to abstract electrons from H(2)O, generating O(2) and a proton gradient subsequently used for ATP formation. The sequence is that of Photosystem II CP47 reaction center protein from Olimarabidopsis pumila (Dwarf rocket).